We begin with the raw amino-acid sequence, 395 residues long: uncharacterized protein (395 aa).

The protein belongs to the UDP-glycosyltransferase family.

This is an uncharacterized protein from Bacillus subtilis (strain 168).